The following is a 357-amino-acid chain: UDP-N-acetylglucosamine--N-acetylmuramyl-(pentapeptide) pyrophosphoryl-undecaprenol N-acetylglucosamine transferase (357 aa).

UDP-N-acetyl-alpha-D-glucosamine-binding positions include 13 to 15 (TGG), asparagine 125, arginine 161, serine 189, isoleucine 243, and glutamine 288.

It belongs to the glycosyltransferase 28 family. MurG subfamily.

The protein localises to the cell inner membrane. The enzyme catalyses di-trans,octa-cis-undecaprenyl diphospho-N-acetyl-alpha-D-muramoyl-L-alanyl-D-glutamyl-meso-2,6-diaminopimeloyl-D-alanyl-D-alanine + UDP-N-acetyl-alpha-D-glucosamine = di-trans,octa-cis-undecaprenyl diphospho-[N-acetyl-alpha-D-glucosaminyl-(1-&gt;4)]-N-acetyl-alpha-D-muramoyl-L-alanyl-D-glutamyl-meso-2,6-diaminopimeloyl-D-alanyl-D-alanine + UDP + H(+). Its pathway is cell wall biogenesis; peptidoglycan biosynthesis. Cell wall formation. Catalyzes the transfer of a GlcNAc subunit on undecaprenyl-pyrophosphoryl-MurNAc-pentapeptide (lipid intermediate I) to form undecaprenyl-pyrophosphoryl-MurNAc-(pentapeptide)GlcNAc (lipid intermediate II). The chain is UDP-N-acetylglucosamine--N-acetylmuramyl-(pentapeptide) pyrophosphoryl-undecaprenol N-acetylglucosamine transferase from Bordetella parapertussis (strain 12822 / ATCC BAA-587 / NCTC 13253).